Reading from the N-terminus, the 384-residue chain is MLTDKFLRLQSALFRLLGLELLHEQDVGHRYPWRSICCILSVASFMPLTIAFGLQNVQNVEQLTDSLCSVLVDLLALCKIGLFLWLYKDFKFLIGQFYCVLQTETHTAVAEMIVTRESRRDQFISAMYAYCFITAGLSACLMSPLSMLISYQRTGELQPKFPFPSVYPWDNMKLSNYIISYFWNVCAALGVALPTVCVDTLFCSLSHNLCALFQIARHKMMHFEGRNTKETHENLKHVFQLYALCLNLGHFLNEYFRPLICQFVAASLHLCVLCYQLSANILQPALLFYAAFTAAVVGQVSIYCFCGSSIHSECQLFGQAIYESSWPHLLQENLQLVSSLKIAMMRSSLGCPIDGYFFEANRETLITVSKAFIKVSKKTPQVND.

At 1-34 (MLTDKFLRLQSALFRLLGLELLHEQDVGHRYPWR) the chain is on the cytoplasmic side. Residues 35–55 (SICCILSVASFMPLTIAFGLQ) traverse the membrane as a helical segment. The Extracellular portion of the chain corresponds to 56 to 66 (NVQNVEQLTDS). Residues 67–87 (LCSVLVDLLALCKIGLFLWLY) traverse the membrane as a helical segment. Topologically, residues 88–128 (KDFKFLIGQFYCVLQTETHTAVAEMIVTRESRRDQFISAMY) are cytoplasmic. A helical transmembrane segment spans residues 129 to 149 (AYCFITAGLSACLMSPLSMLI). Residues 150–177 (SYQRTGELQPKFPFPSVYPWDNMKLSNY) lie on the Extracellular side of the membrane. Residues 178 to 198 (IISYFWNVCAALGVALPTVCV) traverse the membrane as a helical segment. The Cytoplasmic segment spans residues 199-258 (DTLFCSLSHNLCALFQIARHKMMHFEGRNTKETHENLKHVFQLYALCLNLGHFLNEYFRP). The chain crosses the membrane as a helical span at residues 259–279 (LICQFVAASLHLCVLCYQLSA). Topologically, residues 280–284 (NILQP) are extracellular. Residues 285–305 (ALLFYAAFTAAVVGQVSIYCF) form a helical membrane-spanning segment. At 306 to 329 (CGSSIHSECQLFGQAIYESSWPHL) the chain is on the cytoplasmic side. A helical membrane pass occupies residues 330–350 (LQENLQLVSSLKIAMMRSSLG). The Extracellular segment spans residues 351–384 (CPIDGYFFEANRETLITVSKAFIKVSKKTPQVND).

It belongs to the insect chemoreceptor superfamily. Heteromeric odorant receptor channel (TC 1.A.69) family. Or1a subfamily. As to quaternary structure, interacts with Orco. Complexes exist early in the endomembrane system in olfactory sensory neurons (OSNs), coupling these complexes to the conserved ciliary trafficking pathway.

The protein localises to the cell membrane. In terms of biological role, odorant receptor which mediates acceptance or avoidance behavior, depending on its substrates. The odorant receptor repertoire encodes a large collection of odor stimuli that vary widely in identity, intensity, and duration. May form a complex with Orco to form odorant-sensing units, providing sensitive and prolonged odorant signaling and calcium permeability. The polypeptide is Putative odorant receptor 98b (Or98b) (Drosophila melanogaster (Fruit fly)).